We begin with the raw amino-acid sequence, 164 residues long: Protein phosphatase 1 regulatory subunit 14C (164 aa).

Gly residues predominate over residues 1 to 19 (MSVVTGGGEAAGGTSGGGA). Residues 1–72 (MSVVTGGGEA…QRRHQQGKVT (72 aa)) are disordered. At Ser2 the chain carries N-acetylserine. Ser25 carries the post-translational modification Phosphoserine. At Arg27 the chain carries Omega-N-methylarginine. At Ser33 the chain carries Phosphoserine. A compositionally biased stretch (low complexity) spans 50–62 (VATVAAAGQVQQQ). At Thr72 the chain carries Phosphothreonine; by ILK1.

This sequence belongs to the PP1 inhibitor family. In terms of processing, has over 600-fold higher inhibitory activity when phosphorylated, creating a molecular switch for regulating the phosphorylation status of PPP1CA substrates and smooth muscle contraction. The main inhibitory site appears to be Thr-72.

The protein resides in the endomembrane system. Inhibitor of the PP1 regulatory subunit PPP1CA. In Rattus norvegicus (Rat), this protein is Protein phosphatase 1 regulatory subunit 14C (Ppp1r14c).